Consider the following 496-residue polypeptide: Probable cytosol aminopeptidase (496 aa).

The Mn(2+) site is built by lysine 264 and aspartate 269. Lysine 276 is a catalytic residue. Residues aspartate 287, aspartate 346, and glutamate 348 each contribute to the Mn(2+) site. Arginine 350 is a catalytic residue.

It belongs to the peptidase M17 family. The cofactor is Mn(2+).

The protein resides in the cytoplasm. It carries out the reaction Release of an N-terminal amino acid, Xaa-|-Yaa-, in which Xaa is preferably Leu, but may be other amino acids including Pro although not Arg or Lys, and Yaa may be Pro. Amino acid amides and methyl esters are also readily hydrolyzed, but rates on arylamides are exceedingly low.. The catalysed reaction is Release of an N-terminal amino acid, preferentially leucine, but not glutamic or aspartic acids.. Its function is as follows. Presumably involved in the processing and regular turnover of intracellular proteins. Catalyzes the removal of unsubstituted N-terminal amino acids from various peptides. In Geobacter sulfurreducens (strain ATCC 51573 / DSM 12127 / PCA), this protein is Probable cytosol aminopeptidase.